The primary structure comprises 102 residues: Protein CASC2, isoform 3 (102 aa).

Expressed in normal and neoplastic endometrial tissues.

Its function is as follows. May act as a potential tumor suppressor. This chain is Protein CASC2, isoform 3 (CASC2), found in Homo sapiens (Human).